The chain runs to 726 residues: Catalase-peroxidase (726 aa).

The segment at 1–33 is disordered; that stretch reads MSTTDDTHNTLSTGKCPFHQGGHDRSAGAGTAS. The segment at residues 105-226 is a cross-link (tryptophyl-tyrosyl-methioninium (Trp-Tyr) (with M-252)); sequence WHGAGTYRSI…LGATEMGLIY (122 aa). His-106 acts as the Proton acceptor in catalysis. Positions 226 to 252 form a cross-link, tryptophyl-tyrosyl-methioninium (Tyr-Met) (with W-105); it reads YVNPEGPDHSGEPLSAAAAIRATFGNM. His-267 contacts heme b.

The protein belongs to the peroxidase family. Peroxidase/catalase subfamily. Homodimer or homotetramer. Heme b serves as cofactor. In terms of processing, formation of the three residue Trp-Tyr-Met cross-link is important for the catalase, but not the peroxidase activity of the enzyme.

It catalyses the reaction H2O2 + AH2 = A + 2 H2O. It carries out the reaction 2 H2O2 = O2 + 2 H2O. In terms of biological role, bifunctional enzyme with both catalase and broad-spectrum peroxidase activity. The polypeptide is Catalase-peroxidase (Salmonella choleraesuis (strain SC-B67)).